The primary structure comprises 566 residues: Sodium-dependent high-affinity dicarboxylate transporter 3 (566 aa).

Helical transmembrane passes span 55 to 75 (LVLV…GPEW), 92 to 112 (VMPL…VGVL), 123 to 139 (NDTN…AAAV), 162 to 182 (WIML…SNTA), 219 to 239 (MATG…TGTA), 268 to 288 (WIFF…MTLV), 329 to 349 (ILLS…GVFF), 352 to 372 (GAYT…VLPS), 400 to 420 (ETFP…AAGV), 439 to 459 (LPLW…TNIC), 496 to 516 (FAFI…SGMV), and 521 to 541 (MAFV…LYMN).

This sequence belongs to the SLC13A/DASS transporter (TC 2.A.47) family. NADC subfamily. In terms of tissue distribution, nad-1 and nad-2 are coexpressed in the intestinal tract from early larvae to adults, expression is from the pharynx through to the anus. Expression level is significantly greater in the anterior half of the intestine than in the posterior half.

It localises to the membrane. Its function is as follows. High-affinity sodium-dicarboxylate cotransporter that accepts a range of tricarboxylic acid-cycle intermediates with 4-5 carbon atoms. There is no interaction with monocarboxylates. Plays a role in the regulation of life span. The protein is Sodium-dependent high-affinity dicarboxylate transporter 3 (nac-3) of Caenorhabditis elegans.